Reading from the N-terminus, the 432-residue chain is Adenosine 3'-phospho 5'-phosphosulfate transporter 1 (432 aa).

9 helical membrane-spanning segments follow: residues 5–25 (WWAVVVLAAFPSLGAGGETPE), 40–60 (VVNAAGYASFMVPGYLLVQYF), 109–129 (ALKLLFCATGLQVSYLTWGVL), 154–174 (FLVLMNRVLALIVAGLSCVLC), 238–258 (WEYLTATLISIGVSMFLLSSG), 265–285 (PATTLSGLILLAGYIAFDSFT), 299–319 (SVQMMFGVNFFSCLFTVGSLL), 353–373 (LFIFYTIGQFGAAVFTIIMTL), and 387–407 (GHTVTVVGGLGVAVVFAALLL). The residue at position 427 (Ser-427) is a Phosphoserine.

It belongs to the nucleotide-sugar transporter family. SLC35B subfamily. In terms of tissue distribution, highly expressed in the placenta, pancreas, mammary gland and skeletal muscle. Weakly or not expressed in colon, heart and prostate. Expressed in the brain, predominantly in frontal lobe gray matter, subcortical frontal white matter and cerebellum.

It is found in the golgi apparatus membrane. It catalyses the reaction 3'-phosphoadenylyl sulfate(in) + adenosine 3',5'-bisphosphate(out) = 3'-phosphoadenylyl sulfate(out) + adenosine 3',5'-bisphosphate(in). Functionally, probably functions as a 3'-phosphoadenylyl sulfate:adenosine 3',5'-bisphosphate antiporter at the Golgi membranes. Mediates the transport from the cytosol into the lumen of the Golgi of 3'-phosphoadenylyl sulfate/adenosine 3'-phospho 5'-phosphosulfate (PAPS), a universal sulfuryl donor for sulfation events that take place in that compartment. This is Adenosine 3'-phospho 5'-phosphosulfate transporter 1 from Homo sapiens (Human).